The following is a 357-amino-acid chain: Transcription factor PCF6 (357 aa).

The interval 1–29 (MEAAVGDGEGGGGGGGRGKRGRGGGGGEM) is disordered. Residues 7–16 (DGEGGGGGGG) show a composition bias toward gly residues. Positions 52 to 110 (GKDRHSKVYTAKGIRDRRVRLSVATAIQFYDLQDRLGFDQPSKAIEWLINAASPAIDTL) constitute a TCP domain. Disordered stretches follow at residues 125–162 (AADAAPTRRRSQQQQQQLSNKSGCSSTSETSKGSDKEV) and 281–307 (ANRGTLQSNSPSNMSGHHHHHHQQQLQ). 2 stretches are compositionally biased toward polar residues: residues 142-155 (LSNKSGCSSTSETS) and 284-295 (GTLQSNSPSNMS).

Forms homodimers and heterodimers.

The protein localises to the nucleus. In terms of biological role, transcription activator. Binds the promoter core sequence 5'-GGNCC-3'. This Oryza sativa subsp. japonica (Rice) protein is Transcription factor PCF6 (PCF6).